Consider the following 84-residue polypeptide: uncharacterized protein (84 aa).

This is an uncharacterized protein from Acidianus convivator (ATV).